Consider the following 874-residue polypeptide: Alanine--tRNA ligase (874 aa).

Positions 562, 566, 664, and 668 each coordinate Zn(2+).

It belongs to the class-II aminoacyl-tRNA synthetase family. Zn(2+) is required as a cofactor.

It is found in the cytoplasm. It carries out the reaction tRNA(Ala) + L-alanine + ATP = L-alanyl-tRNA(Ala) + AMP + diphosphate. Its function is as follows. Catalyzes the attachment of alanine to tRNA(Ala) in a two-step reaction: alanine is first activated by ATP to form Ala-AMP and then transferred to the acceptor end of tRNA(Ala). Also edits incorrectly charged Ser-tRNA(Ala) and Gly-tRNA(Ala) via its editing domain. In Shewanella oneidensis (strain ATCC 700550 / JCM 31522 / CIP 106686 / LMG 19005 / NCIMB 14063 / MR-1), this protein is Alanine--tRNA ligase.